The sequence spans 650 residues: Chaperone protein DnaK (650 aa).

A Phosphothreonine; by autocatalysis modification is found at T200.

The protein belongs to the heat shock protein 70 family.

Acts as a chaperone. The sequence is that of Chaperone protein DnaK from Paraburkholderia phytofirmans (strain DSM 17436 / LMG 22146 / PsJN) (Burkholderia phytofirmans).